Here is an 88-residue protein sequence, read N- to C-terminus: EMBRYO SURROUNDING FACTOR 1-like protein 11 (88 aa).

The N-terminal stretch at 1-23 (MISSSHFAIFCIILVSLFALQQY) is a signal peptide. 4 disulfides stabilise this stretch: Cys44–Cys59, Cys49–Cys78, Cys57–Cys74, and Cys60–Cys67.

Belongs to the MEG family. Expressed in stems.

In Arabidopsis thaliana (Mouse-ear cress), this protein is EMBRYO SURROUNDING FACTOR 1-like protein 11 (ESFL11).